A 228-amino-acid chain; its full sequence is Ribonuclease H (228 aa).

Residues 2 to 142 form the RNase H type-1 domain; the sequence is GPMRTIVYAD…ADRLATLGRR (141 aa). Residues aspartate 11, glutamate 49, aspartate 71, and aspartate 134 each contribute to the Mg(2+) site.

This sequence belongs to the RNase H family. Monomer. The cofactor is Mg(2+).

Its subcellular location is the cytoplasm. It catalyses the reaction Endonucleolytic cleavage to 5'-phosphomonoester.. In terms of biological role, endonuclease that specifically degrades the RNA of RNA-DNA hybrids. The sequence is that of Ribonuclease H from Methylorubrum extorquens (strain PA1) (Methylobacterium extorquens).